Reading from the N-terminus, the 538-residue chain is MAAKLVSLDMQARTALIKGLDTVADTVKITLGPKGRNVVLEKKFGAPVITNDGVTIAKEIDLEDPFENMGAQLVKEVASKTNDVAGDGTTTATVLAQALVHEGMKHVVAGANPMYVKRGIEKAVEKVVEELKKIAKPVETKQDIAHVAAISANNDEEIGNLIAEAMDKVGKDGVITVEESQGITTTLELVEGMQFDRGYLSAYMITDPERMEAVLEEPYILITDKKISAVSEILPILERVVQTGKPLVIIAEDVEGEALATLVVNKLRGVLQSLAVKAPGFGDRRKAMLQDIAILTGGQFISEETGIKLENVTLDMLGRAEKVRANKDKTTIIGGKGNKKDIEARIAQIKKQLEETDSEFDREKLQERLAKLAGGVAVIKVGAATEVELKEKKHRIEDALSATKAAVEEGIVPGGGVALIRTIKALDDIKVDNEDERIGVEIVRRSLDVPLKLIANNAGKEGSIIAEKVKEMDGPMGYDAARDRFVNMFDAGIVDPCKVTRSALQNAASIAALVLTTEGLVAEKPEKEKQTPPPPPEY.

Residues 30-33, 87-91, G415, 479-481, and D495 each bind ATP; these read TLGP, DGTTT, and DAA.

This sequence belongs to the chaperonin (HSP60) family. As to quaternary structure, forms a cylinder of 14 subunits composed of two heptameric rings stacked back-to-back. Interacts with the co-chaperonin GroES.

It is found in the cytoplasm. The enzyme catalyses ATP + H2O + a folded polypeptide = ADP + phosphate + an unfolded polypeptide.. In terms of biological role, together with its co-chaperonin GroES, plays an essential role in assisting protein folding. The GroEL-GroES system forms a nano-cage that allows encapsulation of the non-native substrate proteins and provides a physical environment optimized to promote and accelerate protein folding. The sequence is that of Chaperonin GroEL from Dictyoglomus turgidum (strain DSM 6724 / Z-1310).